A 232-amino-acid chain; its full sequence is MRKAVVVFSGGQDSTTCLIQAIKNYDEVHCITFDYGQRHKLEIEVAQSITKELGITAHKVMDVGLLNELAISSLTRDNIEVSHELQANGLPNSFVPGRNILFLTLSGIYAYQIGAEAVITGVCETDFSGYPDCRDEFVKSLNQSLVLGMDRALKIETPLMWLNKAETWALADQYKQLDFVREKTLTCYNGIIGDGCGNCPSCDLRRAGLEDYLTNKDAIMADLVAKQAEGQA.

8 to 18 (FSGGQDSTTCL) is a binding site for ATP. Positions 187, 196, 199, and 202 each coordinate Zn(2+).

Belongs to the QueC family. The cofactor is Zn(2+).

It catalyses the reaction 7-carboxy-7-deazaguanine + NH4(+) + ATP = 7-cyano-7-deazaguanine + ADP + phosphate + H2O + H(+). Its pathway is purine metabolism; 7-cyano-7-deazaguanine biosynthesis. In terms of biological role, catalyzes the ATP-dependent conversion of 7-carboxy-7-deazaguanine (CDG) to 7-cyano-7-deazaguanine (preQ(0)). The sequence is that of 7-cyano-7-deazaguanine synthase from Photobacterium profundum (strain SS9).